The following is a 206-amino-acid chain: Ras-related protein RABG3a (206 aa).

Residue 15–22 coordinates GTP; sequence GDSGVGKT. The Effector region signature appears at 37–45; sequence YKATIGADF. Residues 63-67, 125-128, and 158-159 contribute to the GTP site; these read DTAGQ, NKID, and SA. S-geranylgeranyl cysteine attachment occurs at residues cysteine 204 and cysteine 206. Cysteine methyl ester is present on cysteine 206.

This sequence belongs to the small GTPase superfamily. Rab family.

It is found in the cell membrane. In terms of biological role, intracellular vesicle trafficking and protein transport. The protein is Ras-related protein RABG3a (RABG3A) of Arabidopsis thaliana (Mouse-ear cress).